The sequence spans 211 residues: DELTA-stichotoxin-Hmg2a (211 aa).

Positions 1–19 (MNRLIVLFLIVTMICATIA) are cleaved as a signal peptide. Positions 20 to 34 (VPSREELEDQKEYKR) are excised as a propeptide. A plays an important role in the hemolytic activity region spans residues 37–46 (ALAGTIIEGA). Positions 45–64 (GASLGFQILDKVLGELGKVS) are N-terminal region. Phosphocholine contacts are provided by Ser88, Val121, Ser139, Pro141, Tyr167, Tyr171, and Tyr172. The tract at residues 139 to 154 (SVPFDYNFYSNWWDVK) is trp-rich region, which is important for the binding to lipid membrane. Residues 177–179 (RGD) carry the Cell attachment site, crucial for protein stability motif.

It belongs to the actinoporin family. Sea anemone subfamily. In terms of assembly, octamer or nonamer in membranes. Monomer in the soluble state.

It is found in the secreted. It localises to the nematocyst. Its subcellular location is the target cell membrane. Pore-forming protein that forms cations-selective hydrophilic pores of around 1 nm and causes cardiac stimulation and cytolysis. Pore formation is a multi-step process that involves specific recognition of membrane sphingomyelin (but neither cholesterol nor phosphatidylcholine) using aromatic rich region and adjacent phosphocholine (POC) binding site, firm binding to the membrane (mainly driven by hydrophobic interactions) accompanied by the transfer of the N-terminal region to the lipid-water interface and finally pore formation after oligomerization of monomers. This chain is DELTA-stichotoxin-Hmg2a, found in Heteractis magnifica (Magnificent sea anemone).